A 402-amino-acid polypeptide reads, in one-letter code: MDKALLLYSGGLDTSVMIKWIQENLSMDVATLTLNVGNSDLVAIEEKARMLGADPVFVHDAKDEFAEKFIAKSIMANGSYEGYPLSTALARPLMAEKAVKYAQKIGAKYIVHGSTGRGNDQVRFEVSIRALDPSMQVLVPVREWNMMRKDEVEYAKTHGIPVKLDGKYSIDENIWGRSVEGPDLEDIGKGVPEDVYEWVVPPWKANAEHTLKIAFDGGIPSEIDGEKMKLADLIVFLNTLAGSSGIGLIDHMENRVVGLKSHEVYECPAATVITHAHRYLESLILNRNEAEVKMNMDWQFAKFVYGGLWHDPVMNAVNAAEAEFNRDISGEIKIRMSHGIMYIEGAWGNSFLYSKDLINYSSMAFDQRASKGFIDIYGNATVHSHNRNPKMVKEVQGSSVEF.

Residue 7–15 (LYSGGLDTS) coordinates ATP. Y83 is an L-citrulline binding site. G113 contacts ATP. L-aspartate-binding residues include T115, N119, and D120. Residue N119 participates in L-citrulline binding. The L-citrulline site is built by R123, S169, S178, E253, and Y265.

The protein belongs to the argininosuccinate synthase family. Type 1 subfamily. Homotetramer.

Its subcellular location is the cytoplasm. It catalyses the reaction L-citrulline + L-aspartate + ATP = 2-(N(omega)-L-arginino)succinate + AMP + diphosphate + H(+). The protein operates within amino-acid biosynthesis; L-arginine biosynthesis; L-arginine from L-ornithine and carbamoyl phosphate: step 2/3. In Thermoplasma acidophilum (strain ATCC 25905 / DSM 1728 / JCM 9062 / NBRC 15155 / AMRC-C165), this protein is Argininosuccinate synthase.